A 311-amino-acid polypeptide reads, in one-letter code: tRNA-cytidine(32) 2-sulfurtransferase (311 aa).

The short motif at 47-52 (SGGKDS) is the PP-loop motif element. Residues cysteine 122, cysteine 125, and cysteine 213 each contribute to the [4Fe-4S] cluster site.

Belongs to the TtcA family. Homodimer. Requires Mg(2+) as cofactor. [4Fe-4S] cluster serves as cofactor.

Its subcellular location is the cytoplasm. It carries out the reaction cytidine(32) in tRNA + S-sulfanyl-L-cysteinyl-[cysteine desulfurase] + AH2 + ATP = 2-thiocytidine(32) in tRNA + L-cysteinyl-[cysteine desulfurase] + A + AMP + diphosphate + H(+). It functions in the pathway tRNA modification. In terms of biological role, catalyzes the ATP-dependent 2-thiolation of cytidine in position 32 of tRNA, to form 2-thiocytidine (s(2)C32). The sulfur atoms are provided by the cysteine/cysteine desulfurase (IscS) system. The chain is tRNA-cytidine(32) 2-sulfurtransferase from Escherichia coli O1:K1 / APEC.